The chain runs to 393 residues: Methylthioribose kinase (393 aa).

ATP-binding positions include Asn38, Lys53, and 107–109; that span reads EDL. Asp225 is a substrate binding site. Position 242–244 (242–244) interacts with ATP; sequence DPE. Substrate is bound at residue Arg332.

It belongs to the methylthioribose kinase family. Homodimer.

It catalyses the reaction 5-(methylsulfanyl)-D-ribose + ATP = 5-(methylsulfanyl)-alpha-D-ribose 1-phosphate + ADP + H(+). The protein operates within amino-acid biosynthesis; L-methionine biosynthesis via salvage pathway; S-methyl-5-thio-alpha-D-ribose 1-phosphate from S-methyl-5'-thioadenosine (hydrolase route): step 2/2. Its function is as follows. Catalyzes the phosphorylation of methylthioribose into methylthioribose-1-phosphate. In Bacillus anthracis (strain A0248), this protein is Methylthioribose kinase.